The sequence spans 155 residues: MGQPGFRRAIGHVSLVVALMCTTCFQVEGLPHPPATSPSPMMERMVEQAYDDKFDNVDLDEILNQERLLINYIKCLEGTGPCTPDAKMLKEILPDAIQTDCTKCTEKQRYGAEKVTRHLIDNRPTDWERLEKIYDPEGTYRIKYQEMKSKANEEP.

The N-terminal stretch at 1 to 29 is a signal peptide; the sequence is MGQPGFRRAIGHVSLVVALMCTTCFQVEG.

It belongs to the insect A10/OS-D protein family. Antenna. In the third antennal segment. Expressed in sencilla coeloconica.

Its subcellular location is the secreted. In Drosophila melanogaster (Fruit fly), this protein is Putative odorant-binding protein A10 (a10).